The sequence spans 229 residues: Potassium/proton antiporter CemA (229 aa).

The next 3 membrane-spanning stretches (helical) occupy residues Leu-7 to Phe-27, Ile-106 to Met-126, and Ile-189 to Ile-209.

It belongs to the CemA family.

It is found in the plastid. Its subcellular location is the chloroplast inner membrane. The catalysed reaction is K(+)(in) + H(+)(out) = K(+)(out) + H(+)(in). Its function is as follows. Contributes to K(+)/H(+) antiport activity by supporting proton efflux to control proton extrusion and homeostasis in chloroplasts in a light-dependent manner to modulate photosynthesis. Prevents excessive induction of non-photochemical quenching (NPQ) under continuous-light conditions. Indirectly promotes efficient inorganic carbon uptake into chloroplasts. This Ceratophyllum demersum (Rigid hornwort) protein is Potassium/proton antiporter CemA.